A 35-amino-acid chain; its full sequence is Cupiennin-1c (35 aa).

E35 is modified (glutamic acid 1-amide).

Expressed by the venom gland.

Its subcellular location is the secreted. Functionally, has antimicrobial activity against E.coli, E.faecalis, P.aeruginosa, and S.aureus. This is Cupiennin-1c from Cupiennius salei (American wandering spider).